The following is a 57-amino-acid chain: Large ribosomal subunit protein bL32 (57 aa).

The segment at 1–21 is disordered; sequence MAVPKRRTSKKVKNQRRTHKK.

Belongs to the bacterial ribosomal protein bL32 family.

This chain is Large ribosomal subunit protein bL32, found in Oceanobacillus iheyensis (strain DSM 14371 / CIP 107618 / JCM 11309 / KCTC 3954 / HTE831).